Here is a 283-residue protein sequence, read N- to C-terminus: Homeobox protein Hox-A9a (283 aa).

Disordered stretches follow at residues 25–54 (VPRY…GTCS) and 162–181 (EKDA…EKPG). Residues 216–275 (TRKKRCPYTKHQILELEKEFLFNTYLTRDRRYEVARLLNLTERQVKIWFQNRRMKMKKFN) constitute a DNA-binding region (homeobox).

The protein belongs to the Abd-B homeobox family.

Its subcellular location is the nucleus. Functionally, sequence-specific transcription factor which is part of a developmental regulatory system that provides cells with specific positional identities on the anterior-posterior axis. This is Homeobox protein Hox-A9a (hoxa9a) from Takifugu rubripes (Japanese pufferfish).